Here is an 88-residue protein sequence, read N- to C-terminus: LYR motif-containing protein 2 (88 aa).

Residues 1–19 (MAVSRLPPAALSLKQFLQR) constitute a mitochondrion transit peptide.

It belongs to the complex I LYR family.

The protein resides in the mitochondrion. In terms of biological role, involved in efficient integration of the N-module into mitochondrial respiratory chain complex I. The polypeptide is LYR motif-containing protein 2 (lyrm2) (Danio rerio (Zebrafish)).